Here is a 454-residue protein sequence, read N- to C-terminus: Probable ECA polymerase (454 aa).

Transmembrane regions (helical) follow at residues 3-23 (LGQFGGLFCIYLIAVIFILTL), 39-59 (FSMLYLLTFYFGFPLTCMLVF), 61-81 (FGVAVVPVEYLLYAMLSATAF), 119-139 (LALVAVGTVGIFFMQNGFLLF), 154-174 (GVALKRFFYFFIPAMLVVYFL), 180-200 (AWFFFLASTVAFGILTYVIVG), 201-221 (GTRANIIIAFSLFLFIGIVRG), 222-242 (WITLWMLAAAGVFGIVGMFWL), 340-360 (LVVMGGVLFIPLGAIVVGLII), 377-397 (YKAAILQSFCFGAVFNIIVLA), and 409-429 (VFFCVIFGACLVLAKLLYWLF).

Belongs to the WzyE family. As to quaternary structure, probably part of a complex composed of WzxE, WzyE and WzzE.

The protein resides in the cell inner membrane. Its pathway is bacterial outer membrane biogenesis; enterobacterial common antigen biosynthesis. Its function is as follows. Probably involved in the polymerization of enterobacterial common antigen (ECA) trisaccharide repeat units. The polypeptide is Probable ECA polymerase (Yersinia pseudotuberculosis serotype O:1b (strain IP 31758)).